The chain runs to 67 residues: Large ribosomal subunit protein uL29 (67 aa).

This sequence belongs to the universal ribosomal protein uL29 family.

This Methanosarcina barkeri (strain Fusaro / DSM 804) protein is Large ribosomal subunit protein uL29.